The following is a 94-amino-acid chain: MEARDILKRPVITERSSELMAEKKYTFEVDTRANKTQVKDAVEEIFGVKVEKVNVLNYKGKFKRVGRYGGYTNKRRKAIVKLTADSKEIELFEM.

The protein belongs to the universal ribosomal protein uL23 family. Part of the 50S ribosomal subunit. Contacts protein L29, and trigger factor when it is bound to the ribosome.

Functionally, one of the early assembly proteins it binds 23S rRNA. One of the proteins that surrounds the polypeptide exit tunnel on the outside of the ribosome. Forms the main docking site for trigger factor binding to the ribosome. The sequence is that of Large ribosomal subunit protein uL23 from Lysinibacillus sphaericus (strain C3-41).